The sequence spans 337 residues: Nucleoid-associated protein Avin_11450 (337 aa).

Belongs to the YejK family.

It is found in the cytoplasm. The protein localises to the nucleoid. The polypeptide is Nucleoid-associated protein Avin_11450 (Azotobacter vinelandii (strain DJ / ATCC BAA-1303)).